A 695-amino-acid polypeptide reads, in one-letter code: NADPH--cytochrome P450 reductase (695 aa).

Residues M1 to D8 are Lumenal-facing. A helical transmembrane segment spans residues L9–V31. Residues A32 to S695 lie on the Cytoplasmic side of the membrane. Residues C66–W221 enclose the Flavodoxin-like domain. Residues S72–A77, A123–G126, L169–N178, and D204 each bind FMN. An FAD-binding FR-type domain is found at H277 to P538. R296 contacts NADP(+). Residues R451 to S454, T469 to V471, and G486 to T489 each bind FAD. Residues T552, S614–R615, K620–Q624, and E656 contribute to the NADP(+) site. W694 is a binding site for FAD.

The protein belongs to the NADPH--cytochrome P450 reductase family. It in the N-terminal section; belongs to the flavodoxin family. This sequence in the C-terminal section; belongs to the flavoprotein pyridine nucleotide cytochrome reductase family. Requires FAD as cofactor. FMN serves as cofactor.

It is found in the endoplasmic reticulum membrane. The protein resides in the mitochondrion outer membrane. Its subcellular location is the cell membrane. The enzyme catalyses 2 oxidized [cytochrome P450] + NADPH = 2 reduced [cytochrome P450] + NADP(+) + H(+). In terms of biological role, this enzyme is required for electron transfer from NADP to cytochrome P450 in microsomes. It can also provide electron transfer to heme oxygenase and cytochrome B5. Involved in ergosterol biosynthesis. This chain is NADPH--cytochrome P450 reductase, found in Aspergillus oryzae (strain ATCC 42149 / RIB 40) (Yellow koji mold).